The following is a 386-amino-acid chain: tRNA N6-adenosine threonylcarbamoyltransferase (386 aa).

Residues His-141, His-145, and Tyr-162 each contribute to the a divalent metal cation site. Substrate contacts are provided by residues 162-166 (YVSGG), Asp-194, Gly-209, Glu-213, and Asn-315. A divalent metal cation is bound at residue Asp-344.

This sequence belongs to the KAE1 / TsaD family. As to quaternary structure, component of the EKC/KEOPS complex composed of at least BUD32, CGI121, GON7, KAE1 and PCC1; the whole complex dimerizes. A divalent metal cation serves as cofactor.

It localises to the cytoplasm. The protein resides in the nucleus. The catalysed reaction is L-threonylcarbamoyladenylate + adenosine(37) in tRNA = N(6)-L-threonylcarbamoyladenosine(37) in tRNA + AMP + H(+). Functionally, component of the EKC/KEOPS complex that is required for the formation of a threonylcarbamoyl group on adenosine at position 37 (t(6)A37) in tRNAs that read codons beginning with adenine. The complex is probably involved in the transfer of the threonylcarbamoyl moiety of threonylcarbamoyl-AMP (TC-AMP) to the N6 group of A37. KAE1 likely plays a direct catalytic role in this reaction, but requires other protein(s) of the complex to fulfill this activity. The EKC/KEOPS complex also promotes both telomere uncapping and telomere elongation. The complex is required for efficient recruitment of transcriptional coactivators. The polypeptide is tRNA N6-adenosine threonylcarbamoyltransferase (Saccharomyces cerevisiae (strain ATCC 204508 / S288c) (Baker's yeast)).